Reading from the N-terminus, the 966-residue chain is Mitogen-activated protein kinase kinase kinase 13 (966 aa).

Disordered regions lie at residues methionine 1–lysine 22 and serine 93–glycine 112. A compositionally biased stretch (polar residues) spans alanine 96–glycine 112. The Protein kinase domain maps to isoleucine 168–isoleucine 409. ATP is bound by residues leucine 174–valine 182 and lysine 195. The Proton acceptor role is filled by aspartate 279. 2 leucine-zipper regions span residues valine 433 to leucine 454 and leucine 486 to valine 507. Disordered regions lie at residues lysine 534–histidine 652, aspartate 744–arginine 834, serine 846–leucine 873, and aspartate 887–leucine 906. Low complexity predominate over residues serine 567 to lysine 581. Residues serine 582–asparagine 594 show a composition bias toward basic residues. Polar residues-rich tracts occupy residues glutamine 609–proline 629 and phenylalanine 781–leucine 795. The span at aspartate 814–valine 827 shows a compositional bias: acidic residues. The tract at residues serine 815–glutamate 828 is acidic. A compositionally biased stretch (polar residues) spans serine 846 to valine 855.

It belongs to the protein kinase superfamily. STE Ser/Thr protein kinase family. MAP kinase kinase kinase subfamily. In terms of assembly, homodimer; forms dimers through the leucine-zipper motif. Interacts with the C-terminus of MAPK8IP1 through the kinase catalytic domain. Binds PRDX3. Associates with the IKK complex through the kinase domain. Mg(2+) is required as a cofactor. In terms of processing, autophosphorylated on serine and threonine residues.

It is found in the cytoplasm. It localises to the membrane. The enzyme catalyses L-seryl-[protein] + ATP = O-phospho-L-seryl-[protein] + ADP + H(+). The catalysed reaction is L-threonyl-[protein] + ATP = O-phospho-L-threonyl-[protein] + ADP + H(+). Its activity is regulated as follows. Activated by autophosphorylation and homodimerization. Functionally, activates the JUN N-terminal pathway through activation of the MAP kinase kinase MAP2K7. Acts synergistically with PRDX3 to regulate the activation of NF-kappa-B in the cytosol. This activation is kinase-dependent and involves activating the IKK complex, the IKBKB-containing complex that phosphorylates inhibitors of NF-kappa-B. This Pongo abelii (Sumatran orangutan) protein is Mitogen-activated protein kinase kinase kinase 13.